The following is a 427-amino-acid chain: MKSVRVQPASNILGSVSFPGDKSISHRYGMLAALAEGTSRFKNFSTGADCASTLSCMEQLGAKVTHKDDGVIEVEGVAGQLRKSATQLDCGNSGSSMRMLSGILAAQPFDSELMGDASLSRRPMRRIVDPLKQMGGDIETTDGHAPLRVRGSKLTAIDYITPVPSAQVKSCVLFAGAFAAGITSVDEAIRTRDHGEIALKAFGAEVERRQNRVSVRGGAKFRAIEAVVPGDISSAAFFLCAAALFPTSNLVFDGILLNPSRAAILDVLASMGAKPKFLQVQEQHGELVGTITLAPAGLSGLKISGGLTASLIDELPVLAAIGAYTRYGIEIRDAKELRVKESDRIAVVCANLRAMGAEVEEFDDGLRVKGSQKLHGAEIESHEDHRIAMAFAVAALRAEGETVINGADCVAISYPEFFDTLNKVVER.

Positions 22, 23, and 27 each coordinate 3-phosphoshikimate. Phosphoenolpyruvate is bound at residue lysine 22. Residues glycine 94 and arginine 122 each contribute to the phosphoenolpyruvate site. 3-phosphoshikimate-binding residues include serine 165, glutamine 167, aspartate 313, and lysine 340. Residue glutamine 167 coordinates phosphoenolpyruvate. The Proton acceptor role is filled by aspartate 313. Arginine 344 and arginine 386 together coordinate phosphoenolpyruvate.

It belongs to the EPSP synthase family. In terms of assembly, monomer.

The protein localises to the cytoplasm. It carries out the reaction 3-phosphoshikimate + phosphoenolpyruvate = 5-O-(1-carboxyvinyl)-3-phosphoshikimate + phosphate. It participates in metabolic intermediate biosynthesis; chorismate biosynthesis; chorismate from D-erythrose 4-phosphate and phosphoenolpyruvate: step 6/7. Catalyzes the transfer of the enolpyruvyl moiety of phosphoenolpyruvate (PEP) to the 5-hydroxyl of shikimate-3-phosphate (S3P) to produce enolpyruvyl shikimate-3-phosphate and inorganic phosphate. In Koribacter versatilis (strain Ellin345), this protein is 3-phosphoshikimate 1-carboxyvinyltransferase.